The sequence spans 173 residues: Large ribosomal subunit protein uL16 (173 aa).

Belongs to the universal ribosomal protein uL16 family.

The polypeptide is Large ribosomal subunit protein uL16 (Methanosphaerula palustris (strain ATCC BAA-1556 / DSM 19958 / E1-9c)).